The primary structure comprises 459 residues: UDP-N-acetylmuramoylalanine--D-glutamate ligase (459 aa).

119–125 is a binding site for ATP; it reads GTNGKTT.

It belongs to the MurCDEF family.

The protein localises to the cytoplasm. It catalyses the reaction UDP-N-acetyl-alpha-D-muramoyl-L-alanine + D-glutamate + ATP = UDP-N-acetyl-alpha-D-muramoyl-L-alanyl-D-glutamate + ADP + phosphate + H(+). Its pathway is cell wall biogenesis; peptidoglycan biosynthesis. Its function is as follows. Cell wall formation. Catalyzes the addition of glutamate to the nucleotide precursor UDP-N-acetylmuramoyl-L-alanine (UMA). The chain is UDP-N-acetylmuramoylalanine--D-glutamate ligase from Lacticaseibacillus casei (strain BL23) (Lactobacillus casei).